The following is a 353-amino-acid chain: MATLRSLLLAALLWVPAEALSCYGDSGQPVDWFVVYKLPAHSGSRDTPKGLTYKYMDQNSDGWQDGVGYINSSEGAVGRSLQPLYRKNSSQLAFLLYNDQPPKSSSARDSTGHGHTKGVLLLDQEGGFWLVHSVPRFPPPASSGAYTWPPNAQTFGQTLLCVSLPFTQFARIGKQLTYTYPLVYDHKLEGFFAQKLPDLETVIKNQHVLHEPWNSSVILTSQAGATFQSFAKFGKFGDDLYSGWLAEALGTNLQVQFWQNSPGILPSNCSGAYQVLDVTQTGFPGPSRLTFSATEDHSKWCVAPQGPWACVGDMNRNKAETHRGGGTVCTQLPSFWKAFQSLVKDWKPCIEGS.

An N-terminal signal peptide occupies residues 1–19 (MATLRSLLLAALLWVPAEA). Cys22 and Cys161 are oxidised to a cystine. N-linked (GlcNAc...) asparagine glycans are attached at residues Asn71, Asn88, Asn214, and Asn268. 2 disulfide bridges follow: Cys269/Cys349 and Cys310/Cys329. His297 is an active-site residue.

The protein belongs to the DNase II family. Highly expressed in fetal liver macrophages.

It localises to the lysosome. It carries out the reaction Endonucleolytic cleavage to nucleoside 3'-phosphates and 3'-phosphooligonucleotide end-products.. Hydrolyzes DNA under acidic conditions with a preference for double-stranded DNA. Plays a major role in the clearance of nucleic acids generated through apoptosis, hence preventing autoinflammation. Necessary for proper fetal development and for definitive erythropoiesis in fetal liver and bone marrow, where it degrades nuclear DNA expelled from erythroid precursor cells. The protein is Deoxyribonuclease-2-alpha (Dnase2) of Mus musculus (Mouse).